Here is a 253-residue protein sequence, read N- to C-terminus: Giant extracellular hemoglobin linker 1 chain (253 aa).

In terms of domain architecture, LDL-receptor class A spans H89 to I131. 3 cysteine pairs are disulfide-bonded: C91–C105, C98–C118, and C112–C129.

As to quaternary structure, disulfide-linked dimer of identical chains. A model is proposed for the subunit structure of the Tylorrhynchus hemoglobin, consisting of 216 polypeptide chains, 192 heme-containing chains, and 24 linker chains.

Its function is as follows. Acts as a linker for the assembly of heme-containing chains in the construction of giant hemoglobin. This Tylorrhynchus heterochetus (Japanese palolo worm) protein is Giant extracellular hemoglobin linker 1 chain.